The primary structure comprises 229 residues: Adenylate kinase (229 aa).

The propeptide occupies 1–9; that stretch reads MLSTLAKRF. Residue 25 to 30 participates in ATP binding; it reads GVGKGT. Residues 45 to 74 are NMP; that stretch reads STGDALRAEIRGQTPLGKRVKGIIESGGLV. Residues threonine 46, arginine 51, 72-74, 100-103, and glutamine 107 each bind AMP; these read GLV and GIPR. The interval 141–178 is LID; sequence GRLFHPGSGRVYHKVTNPPKKPMTDDITGEPLIIRKDD. An ATP-binding site is contributed by arginine 142. AMP is bound by residues arginine 175 and arginine 186. Glycine 214 contributes to the ATP binding site.

This sequence belongs to the adenylate kinase family.

It is found in the hydrogenosome. The enzyme catalyses AMP + ATP = 2 ADP. In terms of biological role, catalyzes the reversible transfer of the terminal phosphate group between ATP and AMP. Plays an important role in cellular energy homeostasis and in adenine nucleotide metabolism. This chain is Adenylate kinase, found in Trichomonas vaginalis.